The following is a 7260-amino-acid chain: Nonribosomal peptide synthetase ecdA (7260 aa).

Residues 4–80 enclose the Carrier 1 domain; sequence TNEMERKRVF…ELFETIQYLQ (77 aa). The residue at position 41 (serine 41) is an O-(pantetheine 4'-phosphoryl)serine. Residues 134-549 form a condensation 1 region; the sequence is EDVYPSTPLQ…SINEILTLPA (416 aa). Residues 575–965 are adenylation 1; the sequence is QDQVRSQPAA…DGSLLYVGRC (391 aa). Positions 1090–1166 constitute a Carrier 2 domain; sequence APSTAIEHKL…DLARELEGRN (77 aa). At serine 1127 the chain carries O-(pantetheine 4'-phosphoryl)serine. The tract at residues 1208 to 1628 is condensation 2; sequence EDIIPCTAMQ…LGDLSLLSAD (421 aa). Positions 1653 to 2054 are adenylation 2; it reads EEQITARPDS…GRRDTQIKIR (402 aa). The region spanning 2188–2264 is the Carrier 3 domain; sequence TPSTPTESQL…DLANLLSSRF (77 aa). At serine 2225 the chain carries O-(pantetheine 4'-phosphoryl)serine. The segment at 2314–2719 is condensation 3; the sequence is QDVYPCTPLQ…THVVQQLCDP (406 aa). Positions 2763–3156 are adenylation 3; the sequence is KQALAQPNAP…GRRDTQVKIR (394 aa). In terms of domain architecture, Carrier 4 spans 3287-3365; that stretch reads QPATEMEKML…ELAQVLEERV (79 aa). Serine 3324 bears the O-(pantetheine 4'-phosphoryl)serine mark. Residues 3417-3831 form a condensation 4 region; that stretch reads VQDVYPCTPL…LLSPNDQQQI (415 aa). The tract at residues 3851 to 4248 is adenylation 4; the sequence is EEQAMAHPTK…SFVYVARRNT (398 aa). A Carrier 5 domain is found at 4394–4471; the sequence is APATAMERTL…DLANLLADGA (78 aa). At serine 4431 the chain carries O-(pantetheine 4'-phosphoryl)serine. The tract at residues 4510–4910 is condensation 5; sequence EDIYPATPLQ…HFVHVAEQLF (401 aa). Residues 4955–5357 form an adenylation 5 region; it reads ERAALQPNAP…GRRDLQVKIR (403 aa). The region spanning 5496–5573 is the Carrier 6 domain; sequence APRTVMEQQV…DLALVLSERG (78 aa). An O-(pantetheine 4'-phosphoryl)serine modification is found at serine 5533. A condensation 6 region spans residues 5622 to 6043; sequence EDVYPCTPLQ…AVSEKDERQI (422 aa). Residues 6063-6460 are adenylation 6; it reads QEQVARTPGE…GRHDSQVKIR (398 aa). The Carrier 7 domain maps to 6592–6668; it reads APSTAMERQL…EVAQVVEDRV (77 aa). Serine 6629 is modified (O-(pantetheine 4'-phosphoryl)serine). Positions 6718–7133 are condensation 7; the sequence is LPTTDFQALT…ILDSPGLLVS (416 aa). The interval 7241–7260 is disordered; that stretch reads CEEAEKSASVTSSERRLATI.

The protein belongs to the NRP synthetase family.

Its pathway is antifungal biosynthesis. Functionally, nonribosomal peptide synthetase; part of the gene cluster that mediates the biosynthesis of echinocandin B, a fungal lipidated cyclic hexapeptide that acts as an antifungal agent. Linoleoyl-AMP, produced by the fatty-acyl-AMP ligase ecdI, is transferred to the initiation carrier domain (T0) of ecdA. The linoleoyl-S-phosphopantetheinyl-T0 is sequentially extended with L-ornithine, L-threonine, L-proline, L-homotyrosine, L-threonine, and 4R-methyl-L-proline to form the linear hexapeptide. Thereafter, the terminal condensation (C7) performs macrocyclization of the NRPS product and the cyclic scaffold is released from ecdA. All six of the amino acid residues are hydroxylated, including 4R,5R-dihydroxy-L-ornithine, 4R-hydroxyl-L-proline, 3S,4S-dihydroxy-L-homotyrosine, and 3S-hydroxyl-4S-methyl-L-prolin. In the pathway, all the hydroxylation reactions are proposed to occur following completion of the cyclic peptide, so the unhydroxylated precursor produced by ecdA will undergo six rounds of hydroxylation. Five hydroxylase genes (ecdG, ecdH, ecdK, htyE and htyF) are embedded within the echinocandin B (ecd) and L-homotyrosine (hty) clusters. In Aspergillus rugulosus (Emericella rugulosa), this protein is Nonribosomal peptide synthetase ecdA.